A 121-amino-acid polypeptide reads, in one-letter code: Large ribosomal subunit protein bL19 (121 aa).

This sequence belongs to the bacterial ribosomal protein bL19 family.

Functionally, this protein is located at the 30S-50S ribosomal subunit interface and may play a role in the structure and function of the aminoacyl-tRNA binding site. The sequence is that of Large ribosomal subunit protein bL19 from Porphyromonas gingivalis (strain ATCC BAA-308 / W83).